The chain runs to 175 residues: Gamma-crystallin B (175 aa).

2 Beta/gamma crystallin 'Greek key' domains span residues 2 to 40 (GKIT…RVDS) and 41 to 83 (GCWM…RLIP). A connecting peptide region spans residues 84-88 (QHSGT). Beta/gamma crystallin 'Greek key' domains are found at residues 89-129 (YRMR…NVME) and 130-172 (GCWV…RRVM).

This sequence belongs to the beta/gamma-crystallin family.

Its function is as follows. Crystallins are the dominant structural components of the vertebrate eye lens. This is Gamma-crystallin B (Crygb) from Rattus norvegicus (Rat).